The sequence spans 320 residues: Aminoacyl tRNA synthase complex-interacting multifunctional protein 2 (320 aa).

A disordered region spans residues 31 to 51 (HSKTTSPATDAGHVQEPSEPS). Position 36 is a phosphoserine (serine 36). Residues 82–162 (TPDADLDVTN…HTHSSVKNVP (81 aa)) form an interaction with PRKN region. Positions 162–225 (PENLLKCFGE…FLFSLFGQKH (64 aa)) are interaction with TP53. The GST C-terminal domain occupies 220 to 317 (LFGQKHNAVH…NLAPFSTALQ (98 aa)).

Part of the multisynthetase complex (MSC), a multisubunit complex that groups tRNA ligases for Arg (RARS1), Asp (DARS1), Gln (QARS1), Ile (IARS1), Leu (LARS1), Lys (KARS1), Met (MARS1) the bifunctional ligase for Glu and Pro (EPRS1) and the auxiliary subunits AIMP1/p43, AIMP2/p38 and EEF1E1/p18. Interacts (via N-terminus) with KARS1. Interacts with EPRS1. Forms a linear complex that contains MARS1, EEF1E1, EPRS1 and AIMP2 that is at the core of the multisubunit complex. Binds FUBP1 (via C-terminus). Interacts in both its unphosphorylated and phosphorylated forms with p53/TP53 (via N-terminus) in the nucleus following UV irradiation. Interacts (via N-terminus) with PRKN/parkin (via first RING-type domain). Interacts with TARS3. Post-translationally, phosphorylated on serine residues in response to UV irradiation. Ubiquitinated by PRKN, leading to its degradation by the proteasome.

It is found in the cytoplasm. Its subcellular location is the cytosol. It localises to the nucleus. Its function is as follows. Required for assembly and stability of the aminoacyl-tRNA synthase complex. Mediates ubiquitination and degradation of FUBP1, a transcriptional activator of MYC, leading to MYC down-regulation which is required for aveolar type II cell differentiation. Blocks MDM2-mediated ubiquitination and degradation of p53/TP53. Functions as a proapoptotic factor. The polypeptide is Aminoacyl tRNA synthase complex-interacting multifunctional protein 2 (Aimp2) (Rattus norvegicus (Rat)).